The primary structure comprises 356 residues: Tetraacyldisaccharide 4'-kinase (356 aa).

An ATP-binding site is contributed by 67–74 (FVGGTGKT).

Belongs to the LpxK family.

The catalysed reaction is a lipid A disaccharide + ATP = a lipid IVA + ADP + H(+). Its pathway is glycolipid biosynthesis; lipid IV(A) biosynthesis; lipid IV(A) from (3R)-3-hydroxytetradecanoyl-[acyl-carrier-protein] and UDP-N-acetyl-alpha-D-glucosamine: step 6/6. Its function is as follows. Transfers the gamma-phosphate of ATP to the 4'-position of a tetraacyldisaccharide 1-phosphate intermediate (termed DS-1-P) to form tetraacyldisaccharide 1,4'-bis-phosphate (lipid IVA). This chain is Tetraacyldisaccharide 4'-kinase, found in Herminiimonas arsenicoxydans.